The chain runs to 141 residues: Large ribosomal subunit protein uL16 (141 aa).

Belongs to the universal ribosomal protein uL16 family. As to quaternary structure, part of the 50S ribosomal subunit.

Binds 23S rRNA and is also seen to make contacts with the A and possibly P site tRNAs. This is Large ribosomal subunit protein uL16 from Campylobacter fetus subsp. fetus (strain 82-40).